A 424-amino-acid polypeptide reads, in one-letter code: Choline-phosphate cytidylyltransferase (424 aa).

The disordered stretch occupies residues 1–70 (MANPTTGKSS…RKRRRLTKEF (70 aa)). Low complexity predominate over residues 14–24 (KLSNSSLSNLF). Serine 16 bears the Phosphoserine mark. Over residues 35-44 (ETEEQDNEDK) the composition is skewed to acidic residues. The segment covering 45–55 (DESKNQDENKD) has biased composition (basic and acidic residues). Threonine 59 bears the Phosphothreonine mark. CTP contacts are provided by residues 111–119 (VFDLFHLGH) and lysine 149. Substrate contacts are provided by lysine 149 and tryptophan 178. Residues 195–196 (HD), tyrosine 200, and 223–227 (RTNGV) contribute to the CTP site. Serine 346 carries the phosphoserine modification. A disordered region spans residues 348–424 (ATEFANEFTG…LTQKKKQSAN (77 aa)). Residues 381-398 (NSNNTNTNSDSDSNTNST) are compositionally biased toward low complexity. Position 401 is a phosphoserine; by CK2 (serine 401).

The protein belongs to the cytidylyltransferase family.

The protein localises to the membrane. The enzyme catalyses phosphocholine + CTP + H(+) = CDP-choline + diphosphate. The protein operates within phospholipid metabolism; phosphatidylcholine biosynthesis; phosphatidylcholine from phosphocholine: step 1/2. In terms of biological role, catalyzes the key rate-limiting step in the CDP-choline pathway for phosphatidylcholine biosynthesis. This chain is Choline-phosphate cytidylyltransferase (PCT1), found in Saccharomyces cerevisiae (strain ATCC 204508 / S288c) (Baker's yeast).